Here is a 122-residue protein sequence, read N- to C-terminus: Large ribosomal subunit protein bL17 (122 aa).

It belongs to the bacterial ribosomal protein bL17 family. Part of the 50S ribosomal subunit. Contacts protein L32.

The sequence is that of Large ribosomal subunit protein bL17 from Nautilia profundicola (strain ATCC BAA-1463 / DSM 18972 / AmH).